Here is a 370-residue protein sequence, read N- to C-terminus: Putative agmatine deiminase (370 aa).

Residue cysteine 361 is the Amidino-cysteine intermediate of the active site.

The protein belongs to the agmatine deiminase family.

The catalysed reaction is agmatine + H2O = N-carbamoylputrescine + NH4(+). This is Putative agmatine deiminase from Shewanella baltica (strain OS195).